The following is a 268-amino-acid chain: Homeobox protein CDX-1 (268 aa).

Positions 1–152 are disordered; the sequence is MYVGYVLDKD…AGGGGSGKTR (152 aa). Composition is skewed to pro residues over residues 29-42 and 54-67; these read TYAPPGPAPAPPQY and APAPPPTWAAPFPA. Positions 73-91 are enriched in low complexity; that stretch reads AAAYGPGPTASAASPAPLA. The segment covering 92–108 has biased composition (pro residues); the sequence is FGPPPDFSPVPAPPGPG. Positions 115-128 are enriched in low complexity; sequence SLGAPGAPSSPGAP. Positions 154–213 form a DNA-binding region, homeobox; the sequence is KDKYRVVYTDHQRLELEKEFHYSRYITIRRKSELAANLGLTERQVKIWFQNRRAKERKVN. The tract at residues 157–178 is interaction with DNA; sequence YRVVYTDHQRLELEKEFHYSRY. Residues 196-207 are interaction with 5-mCpG DNA; sequence RQVKIWFQNRRA. Residues 209 to 268 form a disordered region; it reads ERKVNKKKQQQQQPLPPTQLPLPLDGTPTPSGPPLGSLCPTNAGLLGTPSPVPVKEEFLP. A compositionally biased stretch (low complexity) spans 229–246; that stretch reads PLPLDGTPTPSGPPLGSL.

Belongs to the Caudal homeobox family. In terms of tissue distribution, intestinal epithelium.

The protein resides in the nucleus. Its function is as follows. Plays a role in transcriptional regulation. Involved in activated KRAS-mediated transcriptional activation of PRKD1 in colorectal cancer (CRC) cells. Binds to the PRKD1 promoter in colorectal cancer (CRC) cells. Could play a role in the terminal differentiation of the intestine. Binds preferentially to methylated DNA. The sequence is that of Homeobox protein CDX-1 (Cdx1) from Mus musculus (Mouse).